We begin with the raw amino-acid sequence, 338 residues long: Plasminogen (338 aa).

Residues 9–88 enclose the Kringle 5 domain; the sequence is CMLGIGKGYQ…LFDYCDVPQC (80 aa). 9 disulfide bridges follow: Cys9–Cys88, Cys30–Cys71, Cys59–Cys83, Cys95–Cys213, Cys105–Cys113, Cys135–Cys151, Cys227–Cys294, Cys257–Cys273, and Cys284–Cys312. Positions 109 to 336 constitute a Peptidase S1 domain; it reads IVGGCVAIAH…FINWIERIMQ (228 aa). The residue at position 125 (Ser125) is a Phosphoserine. Residues His150 and Asp193 each act as charge relay system in the active site. The Charge relay system role is filled by Ser288.

This sequence belongs to the peptidase S1 family. Plasminogen subfamily. Interacts with CSPG4 and AMOT. Interacts (via the Kringle domains) with HRG; the interaction tethers PLG to the cell surface and enhances its activation. Interacts (via Kringle 4 domain) with ADA; the interaction stimulates PLG activation when in complex with DPP4. Angiostatin: Interacts with ATP5F1A; the interaction inhibits most of the angiogenic effects of angiostatin.

It localises to the secreted. The catalysed reaction is Preferential cleavage: Lys-|-Xaa &gt; Arg-|-Xaa, higher selectivity than trypsin. Converts fibrin into soluble products.. With respect to regulation, converted into plasmin by plasminogen activators, both plasminogen and its activator being bound to fibrin. Activated with catalytic amounts of streptokinase. Plasmin dissolves the fibrin of blood clots and acts as a proteolytic factor in a variety of other processes including embryonic development, tissue remodeling, tumor invasion, and inflammation. In ovulation, weakens the walls of the Graafian follicle. It activates the urokinase-type plasminogen activator, collagenases and several complement zymogens, such as C1, C4 and C5. Cleavage of fibronectin and laminin leads to cell detachment and apoptosis. Also cleaves fibrin, thrombospondin and von Willebrand factor. Its role in tissue remodeling and tumor invasion may be modulated by CSPG4. Binds to cells. The sequence is that of Plasminogen (PLG) from Equus caballus (Horse).